The primary structure comprises 153 residues: D-aminoacyl-tRNA deacylase (153 aa).

Positions 137-138 match the Gly-cisPro motif, important for rejection of L-amino acids motif; it reads GP.

It belongs to the DTD family. Homodimer.

The protein resides in the cytoplasm. The enzyme catalyses glycyl-tRNA(Ala) + H2O = tRNA(Ala) + glycine + H(+). It catalyses the reaction a D-aminoacyl-tRNA + H2O = a tRNA + a D-alpha-amino acid + H(+). Functionally, an aminoacyl-tRNA editing enzyme that deacylates mischarged D-aminoacyl-tRNAs. Also deacylates mischarged glycyl-tRNA(Ala), protecting cells against glycine mischarging by AlaRS. Acts via tRNA-based rather than protein-based catalysis; rejects L-amino acids rather than detecting D-amino acids in the active site. By recycling D-aminoacyl-tRNA to D-amino acids and free tRNA molecules, this enzyme counteracts the toxicity associated with the formation of D-aminoacyl-tRNA entities in vivo and helps enforce protein L-homochirality. The sequence is that of D-aminoacyl-tRNA deacylase from Myxococcus xanthus (strain DK1622).